Reading from the N-terminus, the 109-residue chain is Sulredoxin (109 aa).

The Rieske domain maps to 3 to 107; the sequence is WKRTISAKAL…IRDNNGWIEV (105 aa). [2Fe-2S] cluster contacts are provided by C43, H45, C62, and H65.

In terms of assembly, homooligomeric. The cofactor is [2Fe-2S] cluster.

The protein resides in the cytoplasm. Functionally, not yet known. The chain is Sulredoxin (sdx) from Sulfurisphaera tokodaii (strain DSM 16993 / JCM 10545 / NBRC 100140 / 7) (Sulfolobus tokodaii).